A 320-amino-acid polypeptide reads, in one-letter code: Protein rlx (320 aa).

This protein is probably required for relaxation complex formation and plasmid mobilization by conjugative plasmids. This chain is Protein rlx (rlx), found in Staphylococcus aureus.